The primary structure comprises 753 residues: LIM domain and actin-binding protein 1 (753 aa).

The residue at position 1 (Met1) is an N-acetylmethionine. Position 15 is a phosphoserine (Ser15). The span at 46-56 (EEANMERKKNN) shows a compositional bias: basic and acidic residues. Disordered stretches follow at residues 46 to 66 (EEAN…HFRR) and 82 to 186 (GAEF…TSGK). At Ser132 the chain carries Phosphoserine. Over residues 143–152 (PRSENSHDFK) the composition is skewed to basic and acidic residues. Positions 164–166 (CLG) match the Required for interaction with NPC1L1 motif. The segment covering 167 to 177 (DSRHEAEKPET) has biased composition (basic and acidic residues). Phosphoserine occurs at positions 225, 230, 242, and 263. Disordered regions lie at residues 276-326 (AAVS…VSTT) and 341-379 (TCNS…TAKK). Residues 278-291 (VSKQSSPASYTNEL) are compositionally biased toward polar residues. Residues 292 to 305 (KTSESKTHKWEQKE) show a composition bias toward basic and acidic residues. The segment covering 342 to 351 (CNSQVKSEAQ) has biased composition (polar residues). 4 positions are modified to phosphoserine: Ser348, Ser360, Ser367, and Ser372. Positions 363–375 (ARTSSLPESSPSK) are enriched in polar residues. The region spanning 386 to 446 (ESCVECQKTV…KPHFNQLFKS (61 aa)) is the LIM zinc-binding domain. Lys437 is modified (N6-succinyllysine). Phosphoserine occurs at positions 467, 485, and 488. Disordered stretches follow at residues 467 to 493 (SDNE…GVED), 505 to 669 (SMEA…FELE), and 682 to 703 (EDDN…GWSG). Residues 491–511 (VEDAPIAKVGVLAASMEAKAS) are required for interaction with MYO5B. Basic and acidic residues-rich tracts occupy residues 512–525 (SQRE…ETKK) and 554–565 (WPPEDDVCKTEA). The span at 598–609 (SSIKSPKASSPS) shows a compositional bias: low complexity. Residues Ser599, Ser602, Ser607, and Ser615 each carry the phosphoserine modification. The segment covering 630 to 666 (MERKQTENARPSGEKENVGKSRWQGEEVPRSKDRSSF) has biased composition (basic and acidic residues). A phosphoserine mark is found at Ser692, Ser720, and Ser735.

As to quaternary structure, interacts with NPC1L1; bridges NPC1L1 with MYO5B. Interacts with MYO5B; bridges MYO5B with NPC1L1. Interacts with PXN; this complex stabilizes actin dynamics. Binds to G-actin and F-actin. Interacts with LUZP1 (via C-terminus); both proteins restrict ciliation and may work together to regulate this process. Binds RAB40B (GTP-bound); interaction influences LIMA1 subcellular localization in lamellipodia during cell migration. In terms of processing, phosphorylation of the C-terminal region by MAPK1/MAPK3 reduces its association with F-actin and contributes to actin filament reorganization and enhances cell motility. Ubiquitinated by the ECS(RAB40B) complex leading to its degradation. Highly expressed in the small intestine, including the duodenum, jejunum, and ileum. Low expression in the liver and very low expressed in the heart, spleen, lung, brain, and pancreas. Isoform Alpha is highly expressed in embryos from day 7-11 and in adult spleen and lung. Isoform Beta expression is highest in adult kidney, testis, lung and liver, intermediate in heart, brain, spleen, skeletal muscle and low in embryos.

It localises to the cytoplasm. The protein localises to the cell junction. Its subcellular location is the focal adhesion. The protein resides in the cytoskeleton. It is found in the stress fiber. It localises to the cell membrane. The protein localises to the cell projection. Its subcellular location is the ruffle. The protein resides in the lamellipodium. In terms of biological role, actin-binding protein involved in actin cytoskeleton regulation and dynamics. Increases the number and size of actin stress fibers and inhibits membrane ruffling. Inhibits actin filament depolymerization. Bundles actin filaments, delays filament nucleation and reduces formation of branched filaments. Acts as a negative regulator of primary cilium formation. Plays a role in cholesterol homeostasis. Influences plasma cholesterol levels through regulation of intestinal cholesterol absorption. May act as a scaffold protein by regulating NPC1L1 transportation, an essential protein for cholesterol absorption, to the plasma membrane by recruiting MYO5B to NPC1L1, and thus facilitates cholesterol uptake. This is LIM domain and actin-binding protein 1 (Lima1) from Mus musculus (Mouse).